The following is a 121-amino-acid chain: SPbeta prophage-derived uncharacterized protein YorW (121 aa).

This chain is SPbeta prophage-derived uncharacterized protein YorW (yorW), found in Bacillus subtilis (strain 168).